The following is a 159-amino-acid chain: 2-C-methyl-D-erythritol 2,4-cyclodiphosphate synthase (159 aa).

Positions 8 and 10 each coordinate a divalent metal cation. Residues 8 to 10 (DVH) and 34 to 35 (HS) contribute to the 4-CDP-2-C-methyl-D-erythritol 2-phosphate site. His-42 contacts a divalent metal cation. Residues 56-58 (DIG), 100-106 (AQAPKMA), 132-135 (TTTE), Phe-139, and Arg-142 contribute to the 4-CDP-2-C-methyl-D-erythritol 2-phosphate site.

Belongs to the IspF family. As to quaternary structure, homotrimer. It depends on a divalent metal cation as a cofactor.

The catalysed reaction is 4-CDP-2-C-methyl-D-erythritol 2-phosphate = 2-C-methyl-D-erythritol 2,4-cyclic diphosphate + CMP. Its pathway is isoprenoid biosynthesis; isopentenyl diphosphate biosynthesis via DXP pathway; isopentenyl diphosphate from 1-deoxy-D-xylulose 5-phosphate: step 4/6. Its function is as follows. Involved in the biosynthesis of isopentenyl diphosphate (IPP) and dimethylallyl diphosphate (DMAPP), two major building blocks of isoprenoid compounds. Catalyzes the conversion of 4-diphosphocytidyl-2-C-methyl-D-erythritol 2-phosphate (CDP-ME2P) to 2-C-methyl-D-erythritol 2,4-cyclodiphosphate (ME-CPP) with a corresponding release of cytidine 5-monophosphate (CMP). The polypeptide is 2-C-methyl-D-erythritol 2,4-cyclodiphosphate synthase (Marinobacter nauticus (strain ATCC 700491 / DSM 11845 / VT8) (Marinobacter aquaeolei)).